The sequence spans 387 residues: Ferrochelatase (387 aa).

H196 and E277 together coordinate Fe cation.

Belongs to the ferrochelatase family.

The protein resides in the cytoplasm. It carries out the reaction heme b + 2 H(+) = protoporphyrin IX + Fe(2+). The protein operates within porphyrin-containing compound metabolism; protoheme biosynthesis; protoheme from protoporphyrin-IX: step 1/1. Functionally, catalyzes the ferrous insertion into protoporphyrin IX. The chain is Ferrochelatase from Rippkaea orientalis (strain PCC 8801 / RF-1) (Cyanothece sp. (strain PCC 8801)).